The sequence spans 471 residues: Heat shock 70 kDa protein 13 (471 aa).

The first 22 residues, 1–22 (MAGEMTILGSAVLTLLLAGYLA), serve as a signal peptide directing secretion. Positions 317–330 (DSKEPQNGDSELPK) are enriched in basic and acidic residues. The tract at residues 317–350 (DSKEPQNGDSELPKDQLTPGDGHHVNRVFRPGLS) is disordered.

It belongs to the heat shock protein 70 family. As to quaternary structure, binds UBQLN2.

The protein resides in the microsome. Its subcellular location is the endoplasmic reticulum. Has peptide-independent ATPase activity. This Mus musculus (Mouse) protein is Heat shock 70 kDa protein 13 (Hspa13).